The following is a 450-amino-acid chain: 3-phosphoshikimate 1-carboxyvinyltransferase (450 aa).

The disordered stretch occupies residues 1 to 26 (MSAHGDPIPMTAHPSGPLSGTAQVPG). Residues Lys28, Ser29, and Arg33 each contribute to the 3-phosphoshikimate site. Residue Lys28 participates in phosphoenolpyruvate binding. Phosphoenolpyruvate-binding residues include Gly101 and Arg129. 3-phosphoshikimate is bound by residues Ser174, Gln176, Asp327, and Lys354. Phosphoenolpyruvate is bound at residue Gln176. The Proton acceptor role is filled by Asp327. Phosphoenolpyruvate-binding residues include Arg358 and Arg403.

The protein belongs to the EPSP synthase family. Monomer.

Its subcellular location is the cytoplasm. It catalyses the reaction 3-phosphoshikimate + phosphoenolpyruvate = 5-O-(1-carboxyvinyl)-3-phosphoshikimate + phosphate. The protein operates within metabolic intermediate biosynthesis; chorismate biosynthesis; chorismate from D-erythrose 4-phosphate and phosphoenolpyruvate: step 6/7. In terms of biological role, catalyzes the transfer of the enolpyruvyl moiety of phosphoenolpyruvate (PEP) to the 5-hydroxyl of shikimate-3-phosphate (S3P) to produce enolpyruvyl shikimate-3-phosphate and inorganic phosphate. The polypeptide is 3-phosphoshikimate 1-carboxyvinyltransferase (Dinoroseobacter shibae (strain DSM 16493 / NCIMB 14021 / DFL 12)).